The sequence spans 197 residues: MPKVGMQPIRRQQLIQATLTAVDQVGMGDASIALIARLAGVSNGIISHYFQDKNGLIAATMRHLMNALIQNVRERRQALTEDSPRAHLQVIIEGNFDASQVSGPAMKTWLAFWATSMHHPSLHRLQRINDHRLYSNLCCQFRRTLPLEQARSAARGLAALIDGLWLRGALSGDAFDTEQAQRIAYEYMDFQLAKSAS.

The HTH tetR-type domain maps to 8 to 68; sequence PIRRQQLIQA…ATMRHLMNAL (61 aa). A DNA-binding region (H-T-H motif) is located at residues 31–50; that stretch reads SIALIARLAGVSNGIISHYF.

The protein operates within amine and polyamine biosynthesis; betaine biosynthesis via choline pathway [regulation]. In terms of biological role, repressor involved in the biosynthesis of the osmoprotectant glycine betaine. It represses transcription of the choline transporter BetT and the genes of BetAB involved in the synthesis of glycine betaine. The protein is HTH-type transcriptional regulator BetI of Pseudomonas savastanoi pv. phaseolicola (strain 1448A / Race 6) (Pseudomonas syringae pv. phaseolicola (strain 1448A / Race 6)).